Reading from the N-terminus, the 1122-residue chain is Midnolin homolog (1122 aa).

The region spanning 69 to 143 is the Ubiquitin-like domain; it reads INLNISTTTG…IILIPNVETG (75 aa). The segment at 210 to 300 is required for interaction with Pc; it reads GGASGSSINA…SGQRSSGRIG (91 aa). 8 disordered regions span residues 257-399, 596-630, 645-677, 746-775, 840-876, 886-905, 922-955, and 1067-1122; these read VGGS…STLN, KHRH…HFFN, FATS…GAGA, GVVS…KSGS, APTT…RSKM, KCNS…ASGS, AATK…NGCT, and AAPA…DTAA. The segment covering 266-298 has biased composition (low complexity); the sequence is SGTSSSSSSTSSSSSSSSSSSRTRSSGQRSSGR. Composition is skewed to basic residues over residues 300–310 and 321–352; these read GHGHVHSHQHP and SHGH…HHHN. Low complexity predominate over residues 375–397; the sequence is PSSSGASGSAPATGTGQSQSSST. Basic residues predominate over residues 596–610; the sequence is KHRHYHGQGHGHGHG. 6 stretches are compositionally biased toward low complexity: residues 612–627, 648–663, 746–766, 856–867, 889–903, and 922–936; these read GHSS…SSSH, SSSS…SSSP, GVVS…AASG, SGSSSTTSSGSG, SRAQ…TLAS, and AATK…SSHS. Composition is skewed to polar residues over residues 937-954 and 1071-1085; these read CCQT…SNGC and NSIT…VNGN. Positions 1086-1107 are enriched in low complexity; the sequence is TSTAPATAATSAAAAPTAAPPS.

As to quaternary structure, interacts with PRC1 complex member polycomb protein Pc; the interaction targets Pc for ubiquitin-independent proteasomal degradation. Does not interact with PRC1 members Ph, Psc or Sce so does not appear to be a member of the PRC1 complex. Interacts with 26S proteasome regulatory subunit Rpn10.

The protein localises to the nucleus. In terms of biological role, facilitates ubiquitin-independent proteasomal degradation of polycomb protein Pc by interacting directly with the proteasome and recruiting Pc to it. This chain is Midnolin homolog, found in Drosophila melanogaster (Fruit fly).